We begin with the raw amino-acid sequence, 397 residues long: Elongation factor Tu (397 aa).

Positions 10-207 (KPHVNVGTIG…TLDTYIPEPE (198 aa)) constitute a tr-type G domain. The segment at 19–26 (GHVDHGKT) is G1. Position 19–26 (19–26 (GHVDHGKT)) interacts with GTP. T26 is a binding site for Mg(2+). The segment at 60-64 (GITIN) is G2. The G3 stretch occupies residues 81 to 84 (DCPG). GTP contacts are provided by residues 81 to 85 (DCPGH) and 136 to 139 (NKAD). The tract at residues 136 to 139 (NKAD) is G4. The interval 174–176 (SAL) is G5.

Belongs to the TRAFAC class translation factor GTPase superfamily. Classic translation factor GTPase family. EF-Tu/EF-1A subfamily. As to quaternary structure, monomer.

It is found in the cytoplasm. It carries out the reaction GTP + H2O = GDP + phosphate + H(+). Its function is as follows. GTP hydrolase that promotes the GTP-dependent binding of aminoacyl-tRNA to the A-site of ribosomes during protein biosynthesis. The sequence is that of Elongation factor Tu from Pseudomonas fluorescens (strain ATCC BAA-477 / NRRL B-23932 / Pf-5).